The sequence spans 78 residues: Small ribosomal subunit protein bS20 (78 aa).

The segment at 1–34 (MANIKSNLKRNKQNRARHTVVHSQTSAVKTQIKK) is disordered. The segment covering 7 to 20 (NLKRNKQNRARHTV) has biased composition (basic residues). Residues 21-34 (VHSQTSAVKTQIKK) show a composition bias toward polar residues.

It belongs to the bacterial ribosomal protein bS20 family.

Its function is as follows. Binds directly to 16S ribosomal RNA. The chain is Small ribosomal subunit protein bS20 from Malacoplasma penetrans (strain HF-2) (Mycoplasma penetrans).